Consider the following 153-residue polypeptide: Histone H2A (153 aa).

Disordered stretches follow at residues 1–27 (MDTGAKLKKGAGERKGGGPKKKPVSRS) and 131–153 (KAAAAATKEPKSPAKATKSPKKA). A compositionally biased stretch (low complexity) spans 132–147 (AAAAATKEPKSPAKAT). An SPKK motif motif is present at residues 149–152 (SPKK).

This sequence belongs to the histone H2A family. In terms of assembly, the nucleosome is a histone octamer containing two molecules each of H2A, H2B, H3 and H4 assembled in one H3-H4 heterotetramer and two H2A-H2B heterodimers. The octamer wraps approximately 147 bp of DNA.

The protein resides in the nucleus. It localises to the chromosome. In terms of biological role, core component of nucleosome. Nucleosomes wrap and compact DNA into chromatin, limiting DNA accessibility to the cellular machineries which require DNA as a template. Histones thereby play a central role in transcription regulation, DNA repair, DNA replication and chromosomal stability. DNA accessibility is regulated via a complex set of post-translational modifications of histones, also called histone code, and nucleosome remodeling. In Euphorbia esula (Leafy spurge), this protein is Histone H2A.